A 516-amino-acid chain; its full sequence is Protein psiC (516 aa).

A signal peptide spans 1 to 19 (MKILILSFFLILGINLVFC). Residues 109-249 (ESKDEPGIYV…YDACGVCLGK (141 aa)) form the PA14 domain. N-linked (GlcNAc...) asparagine glycosylation is found at Asn-134, Asn-234, Asn-250, Asn-284, Asn-333, Asn-357, and Asn-367. Residues 418-427 (DIIIDSSSDI) show a composition bias toward low complexity. A disordered region spans residues 418–465 (DIIIDSSSDIPIPTLSPSPQPSRFPTDTPTNTPMPPTRPPTPTEDPKI). Residues 449–460 (TPMPPTRPPTPT) show a composition bias toward pro residues.

Belongs to the prespore-cell-inducing factor family.

The protein resides in the secreted. In Dictyostelium discoideum (Social amoeba), this protein is Protein psiC (psiC).